The chain runs to 316 residues: Homoserine kinase (316 aa).

96–106 is an ATP binding site; it reads PHGRGLGSSGA.

Belongs to the GHMP kinase family. Homoserine kinase subfamily.

Its subcellular location is the cytoplasm. It carries out the reaction L-homoserine + ATP = O-phospho-L-homoserine + ADP + H(+). It participates in amino-acid biosynthesis; L-threonine biosynthesis; L-threonine from L-aspartate: step 4/5. In terms of biological role, catalyzes the ATP-dependent phosphorylation of L-homoserine to L-homoserine phosphate. This Clavibacter michiganensis subsp. michiganensis (strain NCPPB 382) protein is Homoserine kinase.